Here is a 250-residue protein sequence, read N- to C-terminus: 5'-nucleotidase SurE (250 aa).

The a divalent metal cation site is built by D8, D9, S40, and N94.

This sequence belongs to the SurE nucleotidase family. A divalent metal cation is required as a cofactor.

It localises to the cytoplasm. It catalyses the reaction a ribonucleoside 5'-phosphate + H2O = a ribonucleoside + phosphate. Nucleotidase that shows phosphatase activity on nucleoside 5'-monophosphates. The protein is 5'-nucleotidase SurE of Wolbachia sp. subsp. Drosophila simulans (strain wRi).